The primary structure comprises 406 residues: Angiopoietin-related protein 4 (406 aa).

The signal sequence occupies residues 1–25; the sequence is MSGAPTAGAALMLCAATAVLLSAQG. Residues 100–143 are a coiled coil; that stretch reads EVLHSLQTQLKAQNSRIQQLFHKVAQQQRHLEKQHLRIQHLQSQ. Asn-177 carries N-linked (GlcNAc...) asparagine glycosylation. The Fibrinogen C-terminal domain occupies 179-401; it reads SRLHRLPRDC…ATTMLIQPMA (223 aa). 2 disulfide bridges follow: Cys-188-Cys-216 and Cys-341-Cys-354.

Homooligomer; disulfide-linked via Cys residues in the N-terminal part of the protein. The homooligomer undergoes proteolytic processing to release the ANGPTL4 C-terminal chain, which circulates as a monomer. The homooligomer unprocessed form is able to interact with the extracellular matrix. Post-translationally, N-glycosylated. In terms of processing, forms disulfide-linked dimers and tetramers. Cleaved into a smaller N-terminal chain and a larger chain that contains the fibrinogen C-terminal domain; both cleaved and uncleaved forms are detected in the extracellular space. The cleaved form is not present within the cell. In terms of tissue distribution, detected in blood plasma (at protein level). Detected in liver. Detected in white fat tissue and placenta. Expressed at high levels in the placenta, heart, liver, muscle, pancreas and lung but expressed poorly in the brain and kidney.

The protein resides in the secreted. It localises to the extracellular space. Its subcellular location is the extracellular matrix. Mediates inactivation of the lipoprotein lipase LPL, and thereby plays a role in the regulation of triglyceride clearance from the blood serum and in lipid metabolism. May also play a role in regulating glucose homeostasis and insulin sensitivity. Inhibits proliferation, migration, and tubule formation of endothelial cells and reduces vascular leakage. Upon heterologous expression, inhibits the adhesion of endothelial cell to the extracellular matrix (ECM), and inhibits the reorganization of the actin cytoskeleton, formation of actin stress fibers and focal adhesions in endothelial cells that have adhered to ANGPTL4-containing ECM (in vitro). Depending on context, may modulate tumor-related angiogenesis. Functionally, mediates inactivation of the lipoprotein lipase LPL, and thereby plays an important role in the regulation of triglyceride clearance from the blood serum and in lipid metabolism. Has higher activity in LPL inactivation than the uncleaved protein. The sequence is that of Angiopoietin-related protein 4 (ANGPTL4) from Homo sapiens (Human).